The following is a 299-amino-acid chain: Apolipoprotein E (299 aa).

Residues 1 to 18 form the signal peptide; the sequence is MKVLCTVLVVTLLAGCRA. The 8 X 22 AA approximate tandem repeats stretch occupies residues 74 to 245; the sequence is VLMEDTMKAV…RLEEVREQME (172 aa). Tandem repeats lie at residues 75-95, 96-117, 118-139, 140-161, 162-183, 184-206, 207-225, and 224-242. Position 137 is a methionine sulfoxide (M137). S141 bears the Phosphoserine mark. Residues 152–162 are LDL and other lipoprotein receptors binding; the sequence is HLRKLRKRMLR. 156 to 159 is a binding site for heparin; that stretch reads LRKR. The interval 205–273 is lipid-binding and lipoprotein association; sequence ALTSQPLQER…GWFEPMVEDM (69 aa). 219–226 serves as a coordination point for heparin; the sequence is GKQLRGRL. The tract at residues 261–273 is specificity for association with VLDL; sequence RLKGWFEPMVEDM.

It belongs to the apolipoprotein A1/A4/E family. In terms of assembly, homotetramer. May interact with ABCA1; functionally associated with ABCA1 in the biogenesis of HDLs. May interact with APP/A4 amyloid-beta peptide; the interaction is extremely stable in vitro but its physiological significance is unclear. May interact with MAPT. May interact with MAP2. In the cerebrospinal fluid, interacts with secreted SORL1. Interacts with PMEL; this allows the loading of PMEL luminal fragment on ILVs to induce fibril nucleation. APOE exists as multiple glycosylated and sialylated glycoforms within cells and in plasma. The extent of glycosylation and sialylation are tissue and context specific. In terms of processing, glycated in plasma VLDL. Post-translationally, phosphorylated by FAM20C in the extracellular medium.

The protein resides in the secreted. The protein localises to the extracellular space. It is found in the extracellular matrix. Its subcellular location is the extracellular vesicle. It localises to the endosome. The protein resides in the multivesicular body. In terms of biological role, APOE is an apolipoprotein, a protein associating with lipid particles, that mainly functions in lipoprotein-mediated lipid transport between organs via the plasma and interstitial fluids. APOE is a core component of plasma lipoproteins and is involved in their production, conversion and clearance. Apolipoproteins are amphipathic molecules that interact both with lipids of the lipoprotein particle core and the aqueous environment of the plasma. As such, APOE associates with chylomicrons, chylomicron remnants, very low density lipoproteins (VLDL) and intermediate density lipoproteins (IDL) but shows a preferential binding to high-density lipoproteins (HDL). It also binds a wide range of cellular receptors including the LDL receptor/LDLR, the LDL receptor-related proteins LRP1, LRP2 and LRP8 and the very low-density lipoprotein receptor/VLDLR that mediate the cellular uptake of the APOE-containing lipoprotein particles. Finally, APOE also has a heparin-binding activity and binds heparan-sulfate proteoglycans on the surface of cells, a property that supports the capture and the receptor-mediated uptake of APOE-containing lipoproteins by cells. A main function of APOE is to mediate lipoprotein clearance through the uptake of chylomicrons, VLDLs, and HDLs by hepatocytes. APOE is also involved in the biosynthesis by the liver of VLDLs as well as their uptake by peripheral tissues ensuring the delivery of triglycerides and energy storage in muscle, heart and adipose tissues. By participating in the lipoprotein-mediated distribution of lipids among tissues, APOE plays a critical role in plasma and tissues lipid homeostasis. APOE is also involved in two steps of reverse cholesterol transport, the HDLs-mediated transport of cholesterol from peripheral tissues to the liver, and thereby plays an important role in cholesterol homeostasis. First, it is functionally associated with ABCA1 in the biogenesis of HDLs in tissues. Second, it is enriched in circulating HDLs and mediates their uptake by hepatocytes. APOE also plays an important role in lipid transport in the central nervous system, regulating neuron survival and sprouting. This Tympanoctomys barrerae (Plains viscacha rat) protein is Apolipoprotein E (Apoe).